Here is a 135-residue protein sequence, read N- to C-terminus: Large ribosomal subunit protein eL32 (135 aa).

A disordered region spans residues 51–77 (GRDNKFRLKMKGKPRPPEPGYRSPRKV).

The protein belongs to the eukaryotic ribosomal protein eL32 family.

This is Large ribosomal subunit protein eL32 (rpl32e) from Nanoarchaeum equitans (strain Kin4-M).